The sequence spans 294 residues: uncharacterized protein (294 aa).

2 disordered regions span residues 25–59 and 77–141; these read VQVYRPVGQGAKRRINSEESDVSEDGNSKPKRVRR and LKDD…FEAP. Residues 86-139 are compositionally biased toward acidic residues; it reads YEELEDDDDDESIEEESDSEFEGESSSDEEESSYDSDSDYDSETEPEDSDDDFE. Residues 201–234 adopt a coiled-coil conformation; sequence IKFYKRNTTFTEEELAEIEEDLLAEVKARYNNMK. The segment covering 242–259 has biased composition (basic and acidic residues); sequence TIETTEDDKKAGEVNKYD. Positions 242-294 are disordered; that stretch reads TIETTEDDKKAGEVNKYDIDDDFIEKTESDEEEEITEDDSSEQETVVVEPVDE. The segment covering 260-283 has biased composition (acidic residues); it reads IDDDFIEKTESDEEEEITEDDSSE.

This is an uncharacterized protein from Magallana gigas (Pacific oyster).